A 656-amino-acid chain; its full sequence is Protein teflon (656 aa).

The segment at 33-56 (LYCHFCRDLFTQLPEFLRHLQSNH) adopts a C2H2-type 1 zinc-finger fold. The interval 80-131 (DKAHEDAQSAGHNSSSGDSRSLMNSEDSRAIDGSEENSDNSPVKPEQIGKQN) is disordered. Positions 89 to 104 (AGHNSSSGDSRSLMNS) are enriched in polar residues. C2H2-type zinc fingers lie at residues 606-628 (YFCKCCDDIFILKKEYLKHLISH) and 632-655 (FQCTKCIKVFKYKGYYEKHLRNAH).

It belongs to the Teflon family.

Its subcellular location is the nucleus. It is found in the chromosome. Its function is as follows. Specifically required in males for proper segregation of autosomal bivalents at meiosis I. Expression is required in the male germ line prior to spermatocyte stage S4. May have a role as a bridging molecule maintaining adhesion to hold autosome bivalents together via heterochromatic connections. This chain is Protein teflon, found in Drosophila sechellia (Fruit fly).